The chain runs to 434 residues: Tryptamine hydroxycinnamoyltransferase 2 (434 aa).

Catalysis depends on proton acceptor residues histidine 154 and aspartate 380.

Belongs to the plant acyltransferase family.

Its function is as follows. Hydroxycinnamoyl transferase that catalyzes the transfer of an acyl from p-coumaryol-CoA to tryptamine, to produce coumaroyl tryptamine. Serotonin and tyramine serve as acyl acceptors in vitro. Can use caffeoyl-CoA, and to a lesser extent feruloyl-CoA, as acyl donors. The polypeptide is Tryptamine hydroxycinnamoyltransferase 2 (Oryza sativa subsp. japonica (Rice)).